The primary structure comprises 367 residues: UDP-N-acetylglucosamine--N-acetylmuramyl-(pentapeptide) pyrophosphoryl-undecaprenol N-acetylglucosamine transferase (367 aa).

Residues 15–17, N127, R163, S191, I249, and Q294 each bind UDP-N-acetyl-alpha-D-glucosamine; that span reads TGG.

It belongs to the glycosyltransferase 28 family. MurG subfamily.

The protein resides in the cell inner membrane. It carries out the reaction di-trans,octa-cis-undecaprenyl diphospho-N-acetyl-alpha-D-muramoyl-L-alanyl-D-glutamyl-meso-2,6-diaminopimeloyl-D-alanyl-D-alanine + UDP-N-acetyl-alpha-D-glucosamine = di-trans,octa-cis-undecaprenyl diphospho-[N-acetyl-alpha-D-glucosaminyl-(1-&gt;4)]-N-acetyl-alpha-D-muramoyl-L-alanyl-D-glutamyl-meso-2,6-diaminopimeloyl-D-alanyl-D-alanine + UDP + H(+). Its pathway is cell wall biogenesis; peptidoglycan biosynthesis. Its function is as follows. Cell wall formation. Catalyzes the transfer of a GlcNAc subunit on undecaprenyl-pyrophosphoryl-MurNAc-pentapeptide (lipid intermediate I) to form undecaprenyl-pyrophosphoryl-MurNAc-(pentapeptide)GlcNAc (lipid intermediate II). This is UDP-N-acetylglucosamine--N-acetylmuramyl-(pentapeptide) pyrophosphoryl-undecaprenol N-acetylglucosamine transferase from Burkholderia thailandensis (strain ATCC 700388 / DSM 13276 / CCUG 48851 / CIP 106301 / E264).